The primary structure comprises 515 residues: Tripartite motif-containing protein 5 (515 aa).

The residue at position 2 (alanine 2) is an N-acetylalanine. An RING-type zinc finger spans residues 15-60 (CPICLELLTEPLSLPCGHSFCQACITANHKESMLYKEEERSCPVCR). Position 87 is a phosphoserine (serine 87). Residues 92–133 (QKVDHCARHGEKLLLFCQEDSKVICWLCERSQEHRGHHTFLM) form a B box-type zinc finger. Residues cysteine 97, histidine 100, cysteine 119, and histidine 125 each contribute to the Zn(2+) site. Residues 137–225 (AQEYHVKLQT…LTKSETEMVQ (89 aa)) are a coiled coil. Residues 187–200 (FEQLREILDWEESN) are required for interaction with GABARAP and for autophagy. In terms of domain architecture, B30.2/SPRY spans 283–515 (LKGMLDMFRE…VPMTLCSPSS (233 aa)).

It belongs to the TRIM/RBCC family. In terms of assembly, can form homodimers and homotrimers. In addition to lower-order dimerization, also exhibits a higher-order multimerization and both low- and high-order multimerizations are essential for its restriction activity. Interacts with BTBD1 and BTBD2. Interacts with PSMC4, PSMC5, PSMD7 and HSPA8/HSC70. Interacts (via B30.2/SPRY domain) with HSPA1A/B. Interacts with PSMC2, MAP3K7/TAK1, TAB2 and TAB3. Interacts with SQSTM1. Interacts with TRIM6 and TRIM34. Interacts with ULK1 (phosphorylated form), GABARAP, GABARAPL1, GABARAPL2, MAP1LC3A, MAP1LC3C and BECN1. In terms of processing, degraded in a proteasome-independent fashion in the absence of viral infection but in a proteasome-dependent fashion following exposure to restriction sensitive virus. Autoubiquitinated in a RING finger- and UBE2D2-dependent manner. Monoubiquitinated by TRIM21. Deubiquitinated by Yersinia YopJ. Ubiquitination may not lead to proteasomal degradation.

The protein resides in the cytoplasm. It is found in the nucleus. The enzyme catalyses S-ubiquitinyl-[E2 ubiquitin-conjugating enzyme]-L-cysteine + [acceptor protein]-L-lysine = [E2 ubiquitin-conjugating enzyme]-L-cysteine + N(6)-ubiquitinyl-[acceptor protein]-L-lysine.. It participates in protein modification; protein ubiquitination. Capsid-specific restriction factor that prevents infection from non-host-adapted retroviruses. Blocks viral replication early in the life cycle, after viral entry but before reverse transcription. In addition to acting as a capsid-specific restriction factor, also acts as a pattern recognition receptor that activates innate immune signaling in response to the retroviral capsid lattice. Binding to the viral capsid triggers its E3 ubiquitin ligase activity, and in concert with the heterodimeric ubiquitin conjugating enzyme complex UBE2V1-UBE2N (also known as UBC13-UEV1A complex) generates 'Lys-63'-linked polyubiquitin chains, which in turn are catalysts in the autophosphorylation of the MAP3K7/TAK1 complex (includes TAK1, TAB2, and TAB3). Activation of the MAP3K7/TAK1 complex by autophosphorylation results in the induction and expression of NF-kappa-B and MAPK-responsive inflammatory genes, thereby leading to an innate immune response in the infected cell. Plays a role in regulating autophagy through activation of autophagy regulator BECN1 by causing its dissociation from its inhibitors BCL2 and TAB2. This is Tripartite motif-containing protein 5 (TRIM5) from Chlorocebus aethiops (Green monkey).